The chain runs to 135 residues: Large ribosomal subunit protein eL32 (135 aa).

This sequence belongs to the eukaryotic ribosomal protein eL32 family. In terms of assembly, component of the large ribosomal subunit.

The protein localises to the cytoplasm. Component of the large ribosomal subunit. The ribosome is a large ribonucleoprotein complex responsible for the synthesis of proteins in the cell. The chain is Large ribosomal subunit protein eL32 (rpl32) from Ictalurus punctatus (Channel catfish).